A 410-amino-acid chain; its full sequence is Platelet-activating factor acetylhydrolase IB subunit alpha (410 aa).

The tract at residues 1–38 is required for self-association and interaction with PAFAH1B2 and PAFAH1B3; sequence MVLSQRQRDELNRAIADYLRSNGYEEAYSVFKKEAELD. The segment at 1–66 is interaction with NDE1; that stretch reads MVLSQRQRDE…SVIRLQKKVM (66 aa). Residues 1-102 are interaction with NDEL1; sequence MVLSQRQRDE…EWIPRPPEKY (102 aa). One can recognise a LisH domain in the interval 7 to 39; the sequence is QRDELNRAIADYLRSNGYEEAYSVFKKEAELDM. An N6-acetyllysine modification is found at lysine 53. Positions 56-82 form a coiled coil; that stretch reads TSVIRLQKKVMELESKLNEAKEEFTSG. The segment at 83–410 is interaction with dynein and dynactin; the sequence is GPLGQKRDPK…DQTVKVWECR (328 aa). 7 WD repeats span residues 106–147, 148–187, 190–229, 232–271, 274–333, 336–377, and 378–410; these read GHRS…RTLK, GHTD…CIRT, GHDH…CVKT, GHRE…CKAE, EHEH…CLMT, GHDN…KTLN, and AHEH…WECR. A Phosphoserine modification is found at serine 109. The segment at 367–409 is interaction with DCX; sequence YKNKRCMKTLNAHEHFVTSLDFHKTAPYVVTGSVDQTVKVWEC. The interaction with NDEL1 stretch occupies residues 388 to 410; sequence FHKTAPYVVTGSVDQTVKVWECR.

It belongs to the WD repeat LIS1/nudF family. As to quaternary structure, can self-associate. Component of the cytosolic PAF-AH (I) heterotetrameric enzyme, which is composed of PAFAH1B1 (beta), PAFAH1B2 (alpha2) and PAFAH1B3 (alpha1) subunits. The catalytic activity of the enzyme resides in the alpha1 (PAFAH1B3) and alpha2 (PAFAH1B2) subunits, whereas the beta subunit (PAFAH1B1) has regulatory activity. Trimer formation is not essential for the catalytic activity. Interacts with the catalytic dimer of PAF-AH (I) heterotetrameric enzyme: interacts with PAFAH1B2 homodimer (alpha2/alpha2 homodimer), PAFAH1B3 homodimer (alpha1/alpha1 homodimer) and PAFAH1B2-PAFAH1B3 heterodimer (alpha2/alpha1 heterodimer). Interacts with DCX, dynein, dynactin, IQGAP1, KATNB1, NDE1, NDEL1, NUDC and RSN. Interacts with DISC1, and this interaction is enhanced by NDEL1. Interacts with DAB1 when DAB1 is phosphorylated in response to RELN/reelin signaling. Interacts with INTS13. Interacts with DCDC1.

It is found in the cytoplasm. The protein resides in the cytoskeleton. The protein localises to the microtubule organizing center. Its subcellular location is the centrosome. It localises to the spindle. It is found in the nucleus membrane. Regulatory subunit (beta subunit) of the cytosolic type I platelet-activating factor (PAF) acetylhydrolase (PAF-AH (I)), an enzyme that catalyzes the hydrolyze of the acetyl group at the sn-2 position of PAF and its analogs and participates in PAF inactivation. Regulates the PAF-AH (I) activity in a catalytic dimer composition-dependent manner. Positively regulates the activity of the minus-end directed microtubule motor protein dynein. May enhance dynein-mediated microtubule sliding by targeting dynein to the microtubule plus end. Required for several dynein- and microtubule-dependent processes such as the maintenance of Golgi integrity, the peripheral transport of microtubule fragments and the coupling of the nucleus and centrosome. Required during brain development for the proliferation of neuronal precursors and the migration of newly formed neurons from the ventricular/subventricular zone toward the cortical plate. Neuronal migration involves a process called nucleokinesis, whereby migrating cells extend an anterior process into which the nucleus subsequently translocates. During nucleokinesis dynein at the nuclear surface may translocate the nucleus towards the centrosome by exerting force on centrosomal microtubules. Also required for proper activation of Rho GTPases and actin polymerization at the leading edge of locomoting cerebellar neurons and postmigratory hippocampal neurons in response to calcium influx triggered via NMDA receptors. May also play a role in other forms of cell locomotion including the migration of fibroblasts during wound healing. Required for dynein recruitment to microtubule plus ends and BICD2-bound cargos. May modulate the Reelin pathway through interaction of the PAF-AH (I) catalytic dimer with VLDLR. The polypeptide is Platelet-activating factor acetylhydrolase IB subunit alpha (Macaca fascicularis (Crab-eating macaque)).